Consider the following 210-residue polypeptide: Protein-L-isoaspartate O-methyltransferase (210 aa).

S59 is a catalytic residue.

It belongs to the methyltransferase superfamily. L-isoaspartyl/D-aspartyl protein methyltransferase family.

It localises to the cytoplasm. The catalysed reaction is [protein]-L-isoaspartate + S-adenosyl-L-methionine = [protein]-L-isoaspartate alpha-methyl ester + S-adenosyl-L-homocysteine. Its function is as follows. Catalyzes the methyl esterification of L-isoaspartyl residues in peptides and proteins that result from spontaneous decomposition of normal L-aspartyl and L-asparaginyl residues. It plays a role in the repair and/or degradation of damaged proteins. The sequence is that of Protein-L-isoaspartate O-methyltransferase from Nitratidesulfovibrio vulgaris (strain ATCC 29579 / DSM 644 / CCUG 34227 / NCIMB 8303 / VKM B-1760 / Hildenborough) (Desulfovibrio vulgaris).